The following is a 39-amino-acid chain: GVDKEGCRYLLGACTIDDDCCLHLGCNKKYGHCGWDGTF.

Disulfide bonds link Cys-7–Cys-21, Cys-14–Cys-26, and Cys-20–Cys-33. Phe-39 bears the Phenylalanine amide mark.

This sequence belongs to the neurotoxin 10 (Hwtx-1) family. 47 subfamily. Expressed by the venom gland.

It is found in the secreted. In terms of biological role, insecticidal toxin that acts, at least partially, by inhibiting insect voltage-gated sodium (NaV) channels of several insect species. The toxin binds to the voltage sensor in NaV channel domain II and inhibits channel opening by shifting the threshold for channel activation to more positive voltages. The toxin binding is sensitive to residues in the S1-S2 loop of the domain II voltage sensor. In vivo, the recombinant toxin causes paralysis and/or death to two dipteran species (Lucilia cuprina and Drosophila melanogaster). In contrast, the toxin does not show paralytic or lethal effect on the cotton bollworm Helicoverpa armigera and the triatomine bug Rhodinius prolixus. The sequence is that of Mu-theraphotoxin-Ae1a from Augacephalus ezendami (Mozambique baboon spider).